A 1530-amino-acid chain; its full sequence is MSCKESPHVGVSTTTVSSVAVQAGDSKIVIAVVKCGKWVRLQLAEAQPNLLEIGSSQDETRKLLHDHELLLAKLKALEDRVWGLLQEADRTAEANKEQSEVYDAMAQTLGEAWATLVSMLERRRELLGLTSEFFQSALEFAIKIDQAEDFLQNPHEFESAEALQSLLLLHDRHAKELLERSLVLLNKSQQLTDFIEKFKCDGSPVNSELIQGAQSSCLKIDSLLELLQDRRRQLDKHLQQQRQELSQVLQLCLWDQQESQVSCWFQKTIRDLQEQSLGSSLSDNKELIRKHEDLTIKAKEWDLAMEKLKSQALGILLSKDLTEKEHLQLSNQKLNRLQEEFGRLMVDRKAWLTMAHDFFTSANEAFDVLGKVEDYLKLLKSEGLSLPALAAKHEELHREIKDSTAAALQKGRTLISQVDSCRAQVTGIHETMGRIQKRVDRLSQQCTAHQEFALKKQQLATSVDDYLRKVEMSVQEMRLVLATTLDVGSSPSESEKILNKYLELDIQAKETAHALEAAAKITTEKNELELNEVALLPFKVKRLEEELSTLSRSVSYRSQVLQTYIAFRKSSEEVEEQLQSLKEFYLTESPWEDEDDAVVTCQSNSAERKWQLFLKKSFLTQDLSLEFLNLISMAKENEILNVKKEMHIVENVMEKQTNGREELSRLRMAWHLKAMEGKPVKERWETFKEKLKKTTHNVKLLHEVLMPVSALDLGGNLQSMSDLRRRWIAMQPQLQQLHEDVQQIMKEWEVLSGQGVPLKEKAEQLKDLIHLHQRQRERIQEYEEILYKTVQFHQVKEELTHLIKPRELELLAQPMELEGSKEVLMQLGRSQGRRAHVDHLHRLALSLGVDIISSVQRPNCSNISAKSLQQQLEALELDSRDWSAKAKEYEQVLACSLEYCTTREEINELKESFKDIKKKFNNLKFNYSKKNEKSRNLKTLQYQIQQVETYADKIQALRKKMEKVNKKISDSVLSYPSNKANTLVEAMEDLKKHVDDFDKVVTDYKMNLDLTEHLQEVIEECNFWYEDASATVVRVGKYSMECQTREAVDILHRQFQKFVTPSVPQQEERIQEVVSLAQRLYGLEEGQKYAEKIVTRHKEILESITELCGSLVELKEKLMQGDVPKVNSNLEDFHGNSIDLLKEPGRDEQTTFSEERSEGQAQGADVSAINGTREDGLPVGLRQSFDKEDSAQGLTLPEDTLSGEDSECISSDDISLPPLPVTPESPLAPSDMEVEEPASSSALALHISGYRMRTGTGGLGKAPESVLPPPTAFTDGYHNKKDTFTSHFERPYPQFKAEPLLTSRGSGEMSTKLHVNVKCPARMPREVHDKALPPSSQAQEISLGTQEKVHADSNVTKTQDRLHAALDVSPGLSSQSDTSRSHQRQVGPQGDRKNSSAEKSVVSLAGQAPHFSRLLSNVTVTEGSPVTLEVEVTGFPEPTLTWFKKGQKLCADGHLQVLHKDTKHSVFIPKVCEADAGLYVAQAQNSSGTLSSKAILHVTGNHGPPITRINWIVLCIIYVSVSVIYWLLTQ.

One copy of the Spectrin repeat lies at 49–127 (NLLEIGSSQD…SMLERRRELL (79 aa)). Position 91 is a phosphothreonine (T91). Coiled coils occupy residues 220 to 251 (IDSLLELLQDRRRQLDKHLQQQRQELSQVLQL), 758 to 785 (LKEKAEQLKDLIHLHQRQRERIQEYEEI), and 865 to 967 (AKSL…VNKK). Disordered stretches follow at residues 1153–1240 (SEER…PASS), 1259–1285 (LGKAPESVLPPPTAFTDGYHNKKDTFT), 1324–1356 (PREVHDKALPPSSQAQEISLGTQEKVHADSNVT), and 1369–1403 (SPGLSSQSDTSRSHQRQVGPQGDRKNSSAEKSVVS). The segment covering 1334–1345 (PSSQAQEISLGT) has biased composition (polar residues). Residues 1409 to 1497 (PHFSRLLSNV…GTLSSKAILH (89 aa)) enclose the Ig-like domain.

As to quaternary structure, interacts with DISC1. Interacts preferentially with phosphorylated forms of myosin regulatory light chain (MRLC). Interacts (via the N-terminal region) with HDAC6; inhibits the deacetylase activity of HDAC6. Interacts with KIBRA (via the C-terminal region); retains AMPAR in the cytosol after internalization. Ubiquitinated and degradated by the CDC20-APC/C pathway. During brain development, CDC20-APC/C complex degrades CCDC141 after centrosome translocation into the dilated area. CCDC141 is restabilized in the dilation until the centrosome enters the dilation, at which point it is once again immediately destabilized by CDC20-APC/C complex. The oscillatory regulation of CCDC141 protein is needed for proper cortical migration. Post-translationally, phosphorylation at Thr-91 by PLK1 affects CCDC141 degradation.

The protein localises to the cytoplasm. It is found in the cytoskeleton. It localises to the microtubule organizing center. Its subcellular location is the centrosome. Its function is as follows. Plays a critical role in cortical radial and GnRH neurons migration during brain development. Regulates cortical radial migration by negatively controlling the activity of histone deacetylase 6 (HDAC6) and promotes centrosome maturation. CAMDI is required for dilation formation of cortical neurons during radial migration. Plays a critical role in learning and memory performance through regulation of AMPA-selective glutamate receptors (AMPARs) cell surface expression in competition with KIBRA. This Rattus norvegicus (Rat) protein is Coiled-coil domain-containing protein 141.